Reading from the N-terminus, the 123-residue chain is MEVLGITEKALNYYRENVKDNKTITPDQALLKMIRNVLLVKETHPERVKKRLFCTEYAYGNMIIKVNRKKQVFEIVNKSGCFSDQNDWKFPKRRYIELSKELGIKDCKFRKITYSKKNHNKQK.

In Bacillus subtilis (strain 168), this protein is SPbeta prophage-derived uncharacterized protein YorE (yorE).